The following is a 309-amino-acid chain: MFSPADNIFIILITGEFILGILGNGYIALVNWIDWIKKKKISTVDYILTNLVIARICLISVMVVNGIVIVLNPDVYTKNKQQIVIFTFWTFANYLNMWITTCLNVFYFLKIASSSHPLFLWLKWKIDMVVHWILLGCFAISLLVSLIAAIVLSCDYRFHAIAKHKRNITEMFHVSKXPYFEPLTLFNLFAIVPFIVSLISFFLLVRSLWRHTKQIKLYATGSRDPSTEVHVRAIKTMTSFIFFFFLYFISSILMTFSYLMTKYKLAVEFGEIAAILYPLGHSLILIVLNNKLRQIFVRMLTCRKIACVI.

Residues 1-7 lie on the Extracellular side of the membrane; the sequence is MFSPADN. A helical membrane pass occupies residues 8–28; the sequence is IFIILITGEFILGILGNGYIA. Topologically, residues 29 to 50 are cytoplasmic; sequence LVNWIDWIKKKKISTVDYILTN. Residues 51–71 traverse the membrane as a helical segment; sequence LVIARICLISVMVVNGIVIVL. At 72-82 the chain is on the extracellular side; that stretch reads NPDVYTKNKQQ. The helical transmembrane segment at 83-103 threads the bilayer; sequence IVIFTFWTFANYLNMWITTCL. Topologically, residues 104–131 are cytoplasmic; that stretch reads NVFYFLKIASSSHPLFLWLKWKIDMVVH. The chain crosses the membrane as a helical span at residues 132-152; it reads WILLGCFAISLLVSLIAAIVL. Over 153–184 the chain is Extracellular; that stretch reads SCDYRFHAIAKHKRNITEMFHVSKXPYFEPLT. Asparagine 167 is a glycosylation site (N-linked (GlcNAc...) asparagine). The chain crosses the membrane as a helical span at residues 185–205; the sequence is LFNLFAIVPFIVSLISFFLLV. At 206–239 the chain is on the cytoplasmic side; sequence RSLWRHTKQIKLYATGSRDPSTEVHVRAIKTMTS. A helical transmembrane segment spans residues 240–260; sequence FIFFFFLYFISSILMTFSYLM. Over 261-266 the chain is Extracellular; that stretch reads TKYKLA. A helical membrane pass occupies residues 267-287; sequence VEFGEIAAILYPLGHSLILIV. Topologically, residues 288-309 are cytoplasmic; sequence LNNKLRQIFVRMLTCRKIACVI.

It belongs to the G-protein coupled receptor T2R family.

Its subcellular location is the membrane. Functionally, receptor that may play a role in the perception of bitterness and is gustducin-linked. May play a role in sensing the chemical composition of the gastrointestinal content. The activity of this receptor may stimulate alpha gustducin, mediate PLC-beta-2 activation and lead to the gating of TRPM5. The protein is Taste receptor type 2 member 8 (TAS2R8) of Pan paniscus (Pygmy chimpanzee).